The primary structure comprises 397 residues: Elongation factor Tu (397 aa).

In terms of domain architecture, tr-type G spans 10–207; it reads KPHVNIGTIG…ACDSYIPEPQ (198 aa). The G1 stretch occupies residues 19 to 26; it reads GHIDHGKT. 19–26 is a GTP binding site; it reads GHIDHGKT. Position 26 (threonine 26) interacts with Mg(2+). Residues 60 to 64 are G2; that stretch reads GITIA. A G3 region spans residues 81-84; the sequence is DCPG. GTP-binding positions include 81–85 and 136–139; these read DCPGH and NKCD. Positions 136 to 139 are G4; it reads NKCD. The G5 stretch occupies residues 174–176; sequence SAL.

It belongs to the TRAFAC class translation factor GTPase superfamily. Classic translation factor GTPase family. EF-Tu/EF-1A subfamily. As to quaternary structure, monomer.

The protein localises to the cytoplasm. It carries out the reaction GTP + H2O = GDP + phosphate + H(+). GTP hydrolase that promotes the GTP-dependent binding of aminoacyl-tRNA to the A-site of ribosomes during protein biosynthesis. The chain is Elongation factor Tu from Nitratidesulfovibrio vulgaris (strain DSM 19637 / Miyazaki F) (Desulfovibrio vulgaris).